The following is a 57-amino-acid chain: Putative antitoxin VapB4 (57 aa).

Possibly the antitoxin component of a type II toxin-antitoxin (TA) system. Its cognate toxin is VapC4 (Potential). The chain is Putative antitoxin VapB4 (vapB4) from Methanocaldococcus jannaschii (strain ATCC 43067 / DSM 2661 / JAL-1 / JCM 10045 / NBRC 100440) (Methanococcus jannaschii).